Reading from the N-terminus, the 63-residue chain is Large ribosomal subunit protein uL29 (63 aa).

The protein belongs to the universal ribosomal protein uL29 family.

In Neisseria meningitidis serogroup C (strain 053442), this protein is Large ribosomal subunit protein uL29.